A 230-amino-acid chain; its full sequence is Urease accessory protein UreE (230 aa).

Positions leucine 197–histidine 230 are disordered. Residues serine 204–histidine 230 are compositionally biased toward basic and acidic residues.

It belongs to the UreE family.

The protein localises to the cytoplasm. In terms of biological role, involved in urease metallocenter assembly. Binds nickel. Probably functions as a nickel donor during metallocenter assembly. This chain is Urease accessory protein UreE, found in Yersinia aldovae.